Here is a 226-residue protein sequence, read N- to C-terminus: MAAPQRSRTTGAPSSGGPSENERGRGGDRRGGDRRGGDRRGGDDRNQFVERVVTINRVAKVVKGGRRFSFTALVVVGDGDGTVGVGYGKAKEVPTAIAKGVEEAKKNFFRVPRIQGTIPHSVRGEAAAGVVFLRPASPGTGVIAGGPVRAVLDCAGIHDVLSKSLGSSNAINIVHATVAALQGLEEPAAVAARRGLPLEDVVPGPILRAQARGRADAAAKASTGVA.

Polar residues predominate over residues 1–18 (MAAPQRSRTTGAPSSGGP). The tract at residues 1–45 (MAAPQRSRTTGAPSSGGPSENERGRGGDRRGGDRRGGDRRGGDDR) is disordered. The segment covering 20 to 45 (ENERGRGGDRRGGDRRGGDRRGGDDR) has biased composition (basic and acidic residues). The S5 DRBM domain occupies 48–111 (FVERVVTINR…EEAKKNFFRV (64 aa)).

It belongs to the universal ribosomal protein uS5 family. Part of the 30S ribosomal subunit. Contacts proteins S4 and S8.

Functionally, with S4 and S12 plays an important role in translational accuracy. Its function is as follows. Located at the back of the 30S subunit body where it stabilizes the conformation of the head with respect to the body. The polypeptide is Small ribosomal subunit protein uS5 (Beutenbergia cavernae (strain ATCC BAA-8 / DSM 12333 / CCUG 43141 / JCM 11478 / NBRC 16432 / NCIMB 13614 / HKI 0122)).